A 208-amino-acid chain; its full sequence is Large ribosomal subunit protein uL3 (208 aa).

The segment at Gly116–Ala148 is disordered.

The protein belongs to the universal ribosomal protein uL3 family. In terms of assembly, part of the 50S ribosomal subunit. Forms a cluster with proteins L14 and L19.

Functionally, one of the primary rRNA binding proteins, it binds directly near the 3'-end of the 23S rRNA, where it nucleates assembly of the 50S subunit. This Streptococcus pyogenes serotype M5 (strain Manfredo) protein is Large ribosomal subunit protein uL3.